A 421-amino-acid chain; its full sequence is Probable dual-specificity RNA methyltransferase RlmN (421 aa).

The disordered stretch occupies residues 1–23 (MTATTAESGRPDQPPTAEAGRPV). The active-site Proton acceptor is E127. Residues 133–372 (YPDRATVCVS…VTTVRDTRGR (240 aa)) enclose the Radical SAM core domain. C140 and C378 form a disulfide bridge. 3 residues coordinate [4Fe-4S] cluster: C147, C151, and C154. Residues 202–203 (GE), S236, 259–261 (SLH), and N335 each bind S-adenosyl-L-methionine. C378 serves as the catalytic S-methylcysteine intermediate. The disordered stretch occupies residues 383-421 (AEPAGKPERTDRPEQVGSDRLVEFGAVGSTTPDGDRVLR). Residues 387–396 (GKPERTDRPE) show a composition bias toward basic and acidic residues.

Belongs to the radical SAM superfamily. RlmN family. It depends on [4Fe-4S] cluster as a cofactor.

Its subcellular location is the cytoplasm. It catalyses the reaction adenosine(2503) in 23S rRNA + 2 reduced [2Fe-2S]-[ferredoxin] + 2 S-adenosyl-L-methionine = 2-methyladenosine(2503) in 23S rRNA + 5'-deoxyadenosine + L-methionine + 2 oxidized [2Fe-2S]-[ferredoxin] + S-adenosyl-L-homocysteine. The catalysed reaction is adenosine(37) in tRNA + 2 reduced [2Fe-2S]-[ferredoxin] + 2 S-adenosyl-L-methionine = 2-methyladenosine(37) in tRNA + 5'-deoxyadenosine + L-methionine + 2 oxidized [2Fe-2S]-[ferredoxin] + S-adenosyl-L-homocysteine. In terms of biological role, specifically methylates position 2 of adenine 2503 in 23S rRNA and position 2 of adenine 37 in tRNAs. This is Probable dual-specificity RNA methyltransferase RlmN from Frankia casuarinae (strain DSM 45818 / CECT 9043 / HFP020203 / CcI3).